The primary structure comprises 742 residues: Photosystem I P700 chlorophyll a apoprotein A2 (742 aa).

Transmembrane regions (helical) follow at residues L46–A69, L135–Q158, L175–I199, I273–Y291, L336–G359, S375–V401, A423–H445, and F525–I543. 2 residues coordinate [4Fe-4S] cluster: C567 and C576. The next 2 membrane-spanning stretches (helical) occupy residues A583 to W604 and L651 to I673. Residues H662, M670, and Y678 each coordinate divinyl chlorophyll a. W679 serves as a coordination point for phylloquinone. Residues L715 to A735 form a helical membrane-spanning segment.

Belongs to the PsaA/PsaB family. In terms of assembly, the PsaA/B heterodimer binds the P700 divinyl chlorophyll special pair and subsequent electron acceptors. PSI consists of a core antenna complex that captures photons, and an electron transfer chain that converts photonic excitation into a charge separation. The cyanobacterial PSI reaction center is composed of one copy each of PsaA,B,C,D,E,F,I,J,K,L,M and X, and forms trimeric complexes. The cofactor is PSI electron transfer chain: 5 divinyl chlorophyll a, 1 divinyl chlorophyll a', 2 phylloquinones and 3 4Fe-4S clusters. PSI core antenna: 90 divinyl chlorophyll a, 22 carotenoids, 3 phospholipids and 1 galactolipid. P700 is a divinyl chlorophyll a/divinyl chlorophyll a' dimer, A0 is one or more divinyl chlorophyll a, A1 is one or both phylloquinones and FX is a shared 4Fe-4S iron-sulfur center..

The protein localises to the cellular thylakoid membrane. It catalyses the reaction reduced [plastocyanin] + hnu + oxidized [2Fe-2S]-[ferredoxin] = oxidized [plastocyanin] + reduced [2Fe-2S]-[ferredoxin]. Its function is as follows. PsaA and PsaB bind P700, the primary electron donor of photosystem I (PSI), as well as the electron acceptors A0, A1 and FX. PSI is a plastocyanin/cytochrome c6-ferredoxin oxidoreductase, converting photonic excitation into a charge separation, which transfers an electron from the donor P700 chlorophyll pair to the spectroscopically characterized acceptors A0, A1, FX, FA and FB in turn. Oxidized P700 is reduced on the lumenal side of the thylakoid membrane by plastocyanin or cytochrome c6. This chain is Photosystem I P700 chlorophyll a apoprotein A2, found in Prochlorococcus marinus (strain MIT 9301).